The sequence spans 95 residues: Aspartyl/glutamyl-tRNA(Asn/Gln) amidotransferase subunit C (95 aa).

Belongs to the GatC family. As to quaternary structure, heterotrimer of A, B and C subunits.

The enzyme catalyses L-glutamyl-tRNA(Gln) + L-glutamine + ATP + H2O = L-glutaminyl-tRNA(Gln) + L-glutamate + ADP + phosphate + H(+). The catalysed reaction is L-aspartyl-tRNA(Asn) + L-glutamine + ATP + H2O = L-asparaginyl-tRNA(Asn) + L-glutamate + ADP + phosphate + 2 H(+). Its function is as follows. Allows the formation of correctly charged Asn-tRNA(Asn) or Gln-tRNA(Gln) through the transamidation of misacylated Asp-tRNA(Asn) or Glu-tRNA(Gln) in organisms which lack either or both of asparaginyl-tRNA or glutaminyl-tRNA synthetases. The reaction takes place in the presence of glutamine and ATP through an activated phospho-Asp-tRNA(Asn) or phospho-Glu-tRNA(Gln). This chain is Aspartyl/glutamyl-tRNA(Asn/Gln) amidotransferase subunit C, found in Gluconobacter oxydans (strain 621H) (Gluconobacter suboxydans).